Here is a 637-residue protein sequence, read N- to C-terminus: Sodium-dependent nutrient amino acid transporter 1 (637 aa).

Polar residues predominate over residues 1 to 17 (MELKTMPQNGANAGTQH). The interval 1–39 (MELKTMPQNGANAGTQHNNNSNNKPDNNEKEAQKKEPER) is disordered. At 1-47 (MELKTMPQNGANAGTQHNNNSNNKPDNNEKEAQKKEPERTNWSNGLE) the chain is on the cytoplasmic side. Positions 26-39 (DNNEKEAQKKEPER) are enriched in basic and acidic residues. Transmembrane regions (helical) follow at residues 48–68 (FLMS…FPFT), 75–95 (GAFL…MYYL), and 128–148 (TICI…YLFV). Asn-181 and Asn-195 each carry an N-linked (GlcNAc...) asparagine glycan. Helical transmembrane passes span 225–245 (PDWK…LVIM), 254–274 (AAYF…GRAV), 303–323 (AVVQ…MFAS), 337–357 (IVTT…FAIL), 397–417 (LFSA…IVAL), 443–463 (ICGF…ILTL), 470–490 (TYVV…IYGL), 515–535 (FFTP…ISPI), and 549–569 (AGWV…WWYI).

This sequence belongs to the sodium:neurotransmitter symporter (SNF) (TC 2.A.22) family.

It is found in the membrane. Its function is as follows. Unusual broad substrate spectrum amino acid:sodium cotransporter that promotes absorption of the D isomers of essential amino acids. Neutral amino acids are the preferred substrates, especially methionine and phenylalanine. The sequence is that of Sodium-dependent nutrient amino acid transporter 1 from Drosophila virilis (Fruit fly).